The chain runs to 161 residues: Peptidyl-prolyl cis-trans isomerase 10 (161 aa).

The PPIase cyclophilin-type domain occupies 1–153 (MSVTLHTTSG…VQQKIQNVTI (153 aa)).

It belongs to the cyclophilin-type PPIase family. PPIL3 subfamily.

The catalysed reaction is [protein]-peptidylproline (omega=180) = [protein]-peptidylproline (omega=0). Functionally, PPIases accelerate the folding of proteins. It catalyzes the cis-trans isomerization of proline imidic peptide bonds in oligopeptides. The chain is Peptidyl-prolyl cis-trans isomerase 10 (cyn-10) from Caenorhabditis elegans.